The following is a 144-amino-acid chain: Large ribosomal subunit protein uL15 (144 aa).

Residues 1–53 (MRLNTLSPADGSKHAPKRLGRGIGSGLGKTGGRGHKGQNSRSGGGVRRGFEGG) are disordered. A compositionally biased stretch (gly residues) spans 21-31 (RGIGSGLGKTG).

This sequence belongs to the universal ribosomal protein uL15 family. Part of the 50S ribosomal subunit.

Its function is as follows. Binds to the 23S rRNA. The chain is Large ribosomal subunit protein uL15 from Erwinia tasmaniensis (strain DSM 17950 / CFBP 7177 / CIP 109463 / NCPPB 4357 / Et1/99).